We begin with the raw amino-acid sequence, 290 residues long: Protease HtpX (290 aa).

Helical transmembrane passes span 4–24 (IMLF…TLKL) and 36–56 (GSLL…SLFI). Residue His-142 coordinates Zn(2+). Residue Glu-143 is part of the active site. Position 146 (His-146) interacts with Zn(2+). 2 helical membrane passes run 150 to 170 (GDMV…MFFA) and 193 to 213 (FIAT…IVMW). Position 219 (Glu-219) interacts with Zn(2+).

It belongs to the peptidase M48B family. It depends on Zn(2+) as a cofactor.

It localises to the cell inner membrane. The chain is Protease HtpX from Ectopseudomonas mendocina (strain ymp) (Pseudomonas mendocina).